The following is a 430-amino-acid chain: Serine--tRNA ligase (430 aa).

237 to 239 provides a ligand contact to L-serine; sequence TAE. 268–270 is a binding site for ATP; that stretch reads RSE. Glu291 contributes to the L-serine binding site. Residue 355–358 coordinates ATP; sequence EISS. Ser391 contacts L-serine.

This sequence belongs to the class-II aminoacyl-tRNA synthetase family. Type-1 seryl-tRNA synthetase subfamily. Homodimer. The tRNA molecule binds across the dimer.

Its subcellular location is the cytoplasm. It carries out the reaction tRNA(Ser) + L-serine + ATP = L-seryl-tRNA(Ser) + AMP + diphosphate + H(+). The enzyme catalyses tRNA(Sec) + L-serine + ATP = L-seryl-tRNA(Sec) + AMP + diphosphate + H(+). It participates in aminoacyl-tRNA biosynthesis; selenocysteinyl-tRNA(Sec) biosynthesis; L-seryl-tRNA(Sec) from L-serine and tRNA(Sec): step 1/1. Catalyzes the attachment of serine to tRNA(Ser). Is also able to aminoacylate tRNA(Sec) with serine, to form the misacylated tRNA L-seryl-tRNA(Sec), which will be further converted into selenocysteinyl-tRNA(Sec). This is Serine--tRNA ligase from Shigella boydii serotype 18 (strain CDC 3083-94 / BS512).